We begin with the raw amino-acid sequence, 48 residues long: Sperm protamine P1 (48 aa).

Belongs to the protamine P1 family. As to expression, testis.

The protein resides in the nucleus. Its subcellular location is the chromosome. In terms of biological role, protamines substitute for histones in the chromatin of sperm during the haploid phase of spermatogenesis. They compact sperm DNA into a highly condensed, stable and inactive complex. In Monophyllus redmani (Greater Antillean long-tongued bat), this protein is Sperm protamine P1 (PRM1).